A 415-amino-acid polypeptide reads, in one-letter code: Adipocyte plasma membrane-associated protein (415 aa).

At 1–39 the chain is on the cytoplasmic side; sequence MNEPEGLRFRRLNRPHIITDETHEPQYKATSTYSGKVFR. A helical transmembrane segment spans residues 40-60; the sequence is VTLLTMVAFLLLPLLVVVFVL. Residues 61–412 are Extracellular-facing; that stretch reads ESPIQPEVFS…RSPYLCKLDL (352 aa). Asn-159 carries N-linked (GlcNAc...) asparagine glycosylation.

It belongs to the strictosidine synthase family.

It is found in the membrane. The polypeptide is Adipocyte plasma membrane-associated protein (apmap) (Danio rerio (Zebrafish)).